A 1506-amino-acid chain; its full sequence is DDB1- and CUL4-associated factor 1 (1506 aa).

The interval Gln-141–Asp-499 is protein kinase-like. A phosphoserine mark is found at Ser-202 and Ser-254. The tract at residues Arg-241–Glu-275 is disordered. Residues Ser-561 to Lys-592 form the Chromo domain. Lys-700 bears the N6-acetyllysine mark. Position 827 is a phosphoserine (Ser-827). The region spanning Pro-845 to Met-877 is the LisH domain. The residue at position 887 (Thr-887) is a Phosphothreonine. Ser-894 and Ser-897 each carry phosphoserine. Disordered regions lie at residues Ala-916–Tyr-946 and Lys-977–Ser-999. Over residues Ser-924–Gly-943 the composition is skewed to pro residues. 2 positions are modified to phosphoserine: Ser-978 and Ser-999. 5 WD repeats span residues Glu-1090–Ser-1129, Cys-1132–His-1173, Phe-1175–Thr-1212, Phe-1214–Arg-1246, and Ser-1247–Thr-1289. The interval Glu-1090–Thr-1289 is WD repeat-like region. 2 short sequence motifs (DWD box) span residues Val-1241–Ala-1248 and Glu-1277–Phe-1284. Residue Ser-1327 is modified to Phosphoserine. A disordered region spans residues Arg-1392–Glu-1506. Acidic residues-rich tracts occupy residues Glu-1395–Glu-1482 and Asp-1489–Ile-1500. Residues Asp-1417–Glu-1506 are interaction with NF2.

Belongs to the VPRBP/DCAF1 family. As to quaternary structure, component of the DCX (DDB1-CUL4-X-box) E3 ubiquitin-protein ligase complex, named CUL4A-RBX1-DDB1-DCAF1/VPRBP complex. Interacts with DDB1; the interaction is direct. Also forms a ternary complex with DDA1 and DDB1. Interacts with NF2 (via FERM domain). Component of the EDVP complex, a E3 ligase complex containing DYRK2, EDD/UBR5, DDB1 and DCAF1. Interacts with DYRK2; the interaction is direct. Interacts with RAG1; the interaction is direct. Interacts with LLGL1 and LLGL2. Interacts with histone H3. Interacts with ESR1 and LATS1; probably recruited by LATS1 to promote ESR1 ubiquitination and ubiquitin-mediated proteasomal degradation. Directly interacts with TET1, TET2 and TET3 (via C-terminus). Interacts with CEP78; promoting DCAF1 localization to centrosomes. As to expression, widely expressed. Expressed in oocytes and zygotes (at protein level).

It localises to the cytoplasm. The protein resides in the nucleus. The protein localises to the cytoskeleton. It is found in the microtubule organizing center. Its subcellular location is the centrosome. The catalysed reaction is L-seryl-[protein] + ATP = O-phospho-L-seryl-[protein] + ADP + H(+). The enzyme catalyses L-threonyl-[protein] + ATP = O-phospho-L-threonyl-[protein] + ADP + H(+). The protein operates within protein modification; protein ubiquitination. Functionally, acts both as a substrate recognition component of E3 ubiquitin-protein ligase complexes and as an atypical serine/threonine-protein kinase, playing key roles in various processes such as cell cycle, telomerase regulation and histone modification. Probable substrate-specific adapter of a DCX (DDB1-CUL4-X-box) E3 ubiquitin-protein ligase complex, named CUL4A-RBX1-DDB1-DCAF1/VPRBP complex, which mediates ubiquitination and proteasome-dependent degradation of proteins such as NF2. Involved in the turnover of methylated proteins: recognizes and binds methylated proteins via its chromo domain, leading to ubiquitination of target proteins by the RBX1-DDB1-DCAF1/VPRBP complex. The CUL4A-RBX1-DDB1-DCAF1/VPRBP complex is also involved in B-cell development: DCAF1 is recruited by RAG1 to ubiquitinate proteins, leading to limit error-prone repair during V(D)J recombination. Also part of the EDVP complex, an E3 ligase complex that mediates ubiquitination of proteins such as TERT, leading to TERT degradation and telomerase inhibition. The EDVP complex also mediates ubiquitination and degradation of CCP110. Also acts as an atypical serine/threonine-protein kinase that specifically mediates phosphorylation of 'Thr-120' of histone H2A (H2AT120ph) in a nucleosomal context, thereby repressing transcription. H2AT120ph is present in the regulatory region of many tumor suppresor genes, down-regulates their transcription and is present at high level in a number of tumors. Involved in JNK-mediated apoptosis during cell competition process via its interaction with LLGL1 and LLGL2. By acting on TET dioxygenses, essential for oocyte maintenance at the primordial follicle stage, hence essential for female fertility. The polypeptide is DDB1- and CUL4-associated factor 1 (Mus musculus (Mouse)).